The primary structure comprises 99 residues: Integration host factor subunit beta (99 aa).

It belongs to the bacterial histone-like protein family. As to quaternary structure, heterodimer of an alpha and a beta chain.

This protein is one of the two subunits of integration host factor, a specific DNA-binding protein that functions in genetic recombination as well as in transcriptional and translational control. This chain is Integration host factor subunit beta, found in Rhizobium etli (strain CIAT 652).